Consider the following 100-residue polypeptide: MFAVIASGSKQYRVKLNDEIYVEKLNSQVGEKIVFDKVYFVNNTFGKPFVKGASVTCEVLKQGRQKKINVIKHISQKHHLKKYGHRQPYTKLKVVAINHG.

Belongs to the bacterial ribosomal protein bL21 family. As to quaternary structure, part of the 50S ribosomal subunit. Contacts protein L20.

In terms of biological role, this protein binds to 23S rRNA in the presence of protein L20. The protein is Large ribosomal subunit protein bL21 of Mycoplasmoides gallisepticum (strain R(low / passage 15 / clone 2)) (Mycoplasma gallisepticum).